The primary structure comprises 356 residues: Protein ATP1B4 (356 aa).

Residues 1 to 109 are Nuclear-facing; sequence MRRQLRSRRA…SLARTGQSRS (109 aa). Residues 26–78 are disordered; that stretch reads EANHNYLADEEEEAEEEAQVMMVPGLEEEEEEEEGKEEEEEREEEEGQGQSTG. Acidic residues-rich tracts occupy residues 33–43 and 51–72; these read ADEEEEAEEEA and LEEE…EEEG. A helical; Signal-anchor for type II membrane protein membrane pass occupies residues 110 to 130; sequence LILVIYFFFYASLAAVITLFI. Residues 131–356 are Perinuclear space-facing; the sequence is YMLFLAISPY…RIIFTLNIET (226 aa).

Belongs to the X(+)/potassium ATPases subunit beta family. In terms of assembly, associates with a SMAD7-transcriptional complex. Interacts with TOR1AIP1. Does not associate with known Na,K-ATPase alpha-subunits. Interacts with SNW1. As to expression, expressed in skeletal muscle (at protein level). Expressed during postnatal development in skeletal muscle and heart.

It localises to the nucleus inner membrane. May act as a transcriptional coregulator during muscle development through its interaction with SNW1. Has lost its ancestral function as a Na,K-ATPase beta-subunit. This chain is Protein ATP1B4 (Atp1b4), found in Mus musculus (Mouse).